The following is a 93-amino-acid chain: Acylphosphatase (93 aa).

In terms of domain architecture, Acylphosphatase-like spans 4–91 (TLHLVIHGRV…PAGTGFRVAA (88 aa)). Catalysis depends on residues R19 and N37.

The protein belongs to the acylphosphatase family.

The catalysed reaction is an acyl phosphate + H2O = a carboxylate + phosphate + H(+). In Azorhizobium caulinodans (strain ATCC 43989 / DSM 5975 / JCM 20966 / LMG 6465 / NBRC 14845 / NCIMB 13405 / ORS 571), this protein is Acylphosphatase (acyP).